Reading from the N-terminus, the 688-residue chain is Complement C1s-1 subcomponent (688 aa).

The N-terminal stretch at 1 to 15 (MWYLVLFSLLASFSA) is a signal peptide. In terms of domain architecture, CUB 1 spans 16 to 130 (EPTMHGEILS…TGFAAYYTAI (115 aa)). E60, D68, D113, D131, V132, and E134 together coordinate Ca(2+). The cysteines at positions 65 and 83 are disulfide-linked. One can recognise an EGF-like; calcium-binding domain in the interval 131–172 (DVNECTDFTDVPCSHFCNNFIGGYFCSCPPEYFLHDDMRNCG). 3 disulfide bridges follow: C135–C147, C143–C156, and C158–C171. The Ca(2+) site is built by N149, F150, and G153. N149 is modified ((3R)-3-hydroxyasparagine). An N-linked (GlcNAc...) asparagine glycan is attached at N174. The cysteines at positions 175 and 202 are disulfide-linked. Residues 175 to 290 (CSGDVFTALI…KGWKLRYHGD (116 aa)) form the CUB 2 domain. E226, D236, D275, G278, and Q279 together coordinate Ca(2+). Residues C234 and C251 are joined by a disulfide bond. 2 Sushi domains span residues 292–356 (ISCP…KCQP) and 357–423 (VYCG…RCIP). Disulfide bonds link C294–C341, C321–C354, C359–C403, C386–C421, C425–C549, C595–C618, and C627–C659. The region spanning 438–680 (IFGGQPAKIE…YVDWILKTMQ (243 aa)) is the Peptidase S1 domain. Catalysis depends on charge relay system residues H475 and D529. The Charge relay system role is filled by S631.

This sequence belongs to the peptidase S1 family. In terms of assembly, core component of the complement C1 complex, a calcium-dependent complex composed of 1 molecule of the C1Q subcomplex, 2 molecules of C1R and 2 molecules of C1S. The C1Q subcomplex is composed 18 subunits: 3 chains of C1QA, C1QB, and C1QC trimerize to form 6 collagen-like triple helices connected to six globular ligand-recognition modules. Post-translationally, cleaved and activated by C1R to generate Complement C1s subcomponent heavy and light chains. The iron and 2-oxoglutarate dependent 3-hydroxylation of aspartate and asparagine is (R) stereospecific within EGF domains. In terms of tissue distribution, specifically expressed in male reproductive tissues.

It is found in the secreted. Its subcellular location is the cell surface. The enzyme catalyses Cleavage of Arg-|-Ala bond in complement component C4 to form C4a and C4b, and Lys(or Arg)-|-Lys bond in complement component C2 to form C2a and C2b: the 'classical' pathway C3 convertase.. With respect to regulation, cleaved and activated by C1R. Immunoglobulin-binding promotes autoactivation of C1R, which results in the cleavage of the Arg-Ile bond in the catalytic domain. Inhibited by C1 inhibitor (SERPING1). Functionally, component of the complement C1 complex, a multiprotein complex that initiates the classical pathway of the complement system, a cascade of proteins that leads to phagocytosis and breakdown of pathogens and signaling that strengthens the adaptive immune system. C1S is activated following association of the C1 complex with immunoglobulins (IgG or IgM) complexed with antigens to form antigen-antibody complexes on the surface of pathogens. C1S is cleaved and activated by C1R to generate C1s subcomponent heavy and light chains. C1s subcomponent light chain then cleaves and activates C2 and C4, the next components of the classical complement pathway. Serine protease component of the complement C1 complex, which catalyzes cleavage and activation of C2 and C4, the next components of the classical complement pathway. Also cleaves IGFBP5 and thereby inhibits the trophic effects of IGF1. The polypeptide is Complement C1s-1 subcomponent (Mus musculus (Mouse)).